Reading from the N-terminus, the 350-residue chain is Alcohol dehydrogenase 1 (350 aa).

Cys46, His69, Cys100, Cys103, Cys106, Cys114, and Cys156 together coordinate Zn(2+). NAD(+) contacts are provided by residues 180 to 186 (GAAGGLG), Asp204, Lys209, 271 to 273 (VGL), and Arg343.

It belongs to the zinc-containing alcohol dehydrogenase family. Homotetramer. Requires Zn(2+) as cofactor.

The protein resides in the cytoplasm. The catalysed reaction is a primary alcohol + NAD(+) = an aldehyde + NADH + H(+). It carries out the reaction a secondary alcohol + NAD(+) = a ketone + NADH + H(+). The sequence is that of Alcohol dehydrogenase 1 (ADH1) from Kluyveromyces lactis (strain ATCC 8585 / CBS 2359 / DSM 70799 / NBRC 1267 / NRRL Y-1140 / WM37) (Yeast).